The sequence spans 292 residues: Forkhead box protein R1 (292 aa).

Disordered regions lie at residues 31–50 and 65–166; these read PPKLPLEKKPNPDKDGPDYE and PGKL…ASSQ. Basic and acidic residues-rich tracts occupy residues 35 to 47 and 70 to 79; these read PLEKKPNPDKDGP and VSGRRKREDL. A compositionally biased stretch (polar residues) spans 80–89; the sequence is TSTLPSSQPP. Positions 129 to 140 are enriched in acidic residues; sequence LTEEEEAEDQED. The span at 149 to 161 shows a compositional bias: basic residues; sequence PHKRAPLQSRRLR. Residues 173-272 constitute a DNA-binding region (fork-head); that stretch reads RPPLNYFHLI…EEARALASTR (100 aa).

As to expression, expressed in testis (at protein level).

It is found in the nucleus. The protein localises to the cytoplasm. The protein resides in the perinuclear region. In terms of biological role, transcription factor which acts as both an activator and a repressor. Activates transcription of a number of genes including the heat shock chaperones HSPA1A and HSPA6 and the antioxidant NADPH-dependent reductase DHRS2 which are involved in protection against oxidative stress. Required for normal brain development. The chain is Forkhead box protein R1 (FOXR1) from Homo sapiens (Human).